Consider the following 546-residue polypeptide: Immunoglobulin-like domain-containing receptor 1 (546 aa).

Positions 1–23 (MAWPKLPAPWLLLCTWLPAGCLS) are cleaved as a signal peptide. The Ig-like V-type domain occupies 24–162 (LLVTVQHTER…TSGDPDKEVK (139 aa)). Over 24-167 (LLVTVQHTER…DKEVKLIVLH (144 aa)) the chain is Extracellular. C45 and C145 are oxidised to a cystine. A helical transmembrane segment spans residues 168–188 (WLTVIFIILGALLLLLLIGVC). The Cytoplasmic segment spans residues 189–546 (WCQCCPQYCC…SSHSGRSVVI (358 aa)). Positions 399–546 (WSGRHRSSRL…SSHSGRSVVI (148 aa)) are disordered. Over residues 442 to 457 (RCQERPRRPSPRESTQ) the composition is skewed to basic and acidic residues. Residues 458 to 467 (RHGRRRRHRS) are compositionally biased toward basic residues. Phosphoserine occurs at positions 499 and 501. Basic and acidic residues predominate over residues 527–539 (GSVERRSEKDSSH).

The protein belongs to the immunoglobulin superfamily. LISCH7 family. In terms of assembly, homooligomer. Interacts with MARVELD2 and OCLN; the interaction is required to recruit MARVELD2 to tricellular contacts. Interacts (via C-terminus) with TRA2A, TRA2B and SRSF1. Interacts with PLSCR1.

The protein localises to the cell membrane. The protein resides in the cell junction. Its subcellular location is the tight junction. It is found in the nucleus. It localises to the cytoplasm. In terms of biological role, maintains epithelial barrier function by recruiting MARVELD2/tricellulin to tricellular tight junctions (tTJs). Crucial for normal hearing by maintaining the structural and functional integrity of tTJs, which are critical for the survival of auditory neurosensory HCs. Mediates fatty acids and lipoproteins-stimulated CCK/cholecystokinin secretion in the small intestine. In the inner ear, may regulate alternative pre-mRNA splicing via binding to TRA2A, TRA2B and SRSF1. The sequence is that of Immunoglobulin-like domain-containing receptor 1 (ILDR1) from Pongo abelii (Sumatran orangutan).